Consider the following 242-residue polypeptide: Probable transcriptional regulatory protein LSL_0422 (242 aa).

A disordered region spans residues 1–21 (MSGHSKWHNIQGRKNAQDAKR).

Belongs to the TACO1 family.

The protein localises to the cytoplasm. The polypeptide is Probable transcriptional regulatory protein LSL_0422 (Ligilactobacillus salivarius (strain UCC118) (Lactobacillus salivarius)).